Reading from the N-terminus, the 609-residue chain is MVTHAMEEPKTFNIPTFVLDENCNFIPEVLSRANAKYIKDVLIQDSYNTVCLANSFIPMTIQTAEQIMVIITKFKFSRARDLFEKVLRLGVHINRFYAGKKQVKHMITMMKSLFDTEEAMRRLDRALMGLFVDARGSSYMPLIALSLHENGLPDSKFTKAVKLINTTLNSFHNRPDADIEQYAQKLRAYNYLYKIPHYTLKEAVDVYSENLKDLSIGVNKKPTLLFTSSDDGYLSHIFNDMLFLTSTWNMIYNCKVQIRRLTTWIKYEINSIVEDCVLVGFQLPDLKDTILDLAALTSNMNLVDPDKDLFSHYKLILEKLFEISIFATKANICILPTFIKSHLIEFEDVLKRSNDDEDLNYLLLKSNDSDDEYDEDKLPIQVDPGRVDNVLTDSNFFNVTADNAFSSIAIMPISYDKIIDVEENVIQVLEVEMQSLSAVVYGAVANKYGLSLPQVIKRLNQNEGRASSRASSSHSTSTIPYSPPQSGRSTPTSILRQRAPIRSNSRSSSVSFSQDDDNRSHYSDETNISDYSYPMADLDLEDEEPMEDHPHSPQSASSNNSMSRRSRALQNEQRRRTPTMAPPSPARGQNNARLRRRTRRSTETNDERL.

The segment at 461–609 (QNEGRASSRA…RSTETNDERL (149 aa)) is disordered. Positions 465–478 (RASSRASSSHSTST) are enriched in low complexity. Residues 484 to 495 (PQSGRSTPTSIL) show a composition bias toward polar residues. Low complexity-rich tracts occupy residues 503–513 (SNSRSSSVSFS) and 552–563 (SPQSASSNNSMS). Positions 600 to 609 (RSTETNDERL) are enriched in basic and acidic residues.

Belongs to the herpesviridae pp85 family. Post-translationally, phosphorylated.

Its subcellular location is the virion tegument. It is found in the host cytoplasm. The chain is Phosphoprotein 85 (U14) from Homo sapiens (Human).